The sequence spans 131 residues: Large ribosomal subunit protein eL32 (131 aa).

The protein belongs to the eukaryotic ribosomal protein eL32 family.

This Eremothecium gossypii (strain ATCC 10895 / CBS 109.51 / FGSC 9923 / NRRL Y-1056) (Yeast) protein is Large ribosomal subunit protein eL32 (RPL32).